Here is a 591-residue protein sequence, read N- to C-terminus: Aspartate--tRNA(Asp/Asn) ligase (591 aa).

Glutamate 174 contributes to the L-aspartate binding site. The aspartate stretch occupies residues 198 to 201 (QLFK). Arginine 220 is a binding site for L-aspartate. ATP-binding positions include 220-222 (RDE) and glutamine 229. Histidine 450 is a binding site for L-aspartate. Glutamate 483 is a binding site for ATP. Residue arginine 490 participates in L-aspartate binding. 535–538 (GLDR) lines the ATP pocket.

The protein belongs to the class-II aminoacyl-tRNA synthetase family. Type 1 subfamily. Homodimer.

Its subcellular location is the cytoplasm. The enzyme catalyses tRNA(Asx) + L-aspartate + ATP = L-aspartyl-tRNA(Asx) + AMP + diphosphate. Aspartyl-tRNA synthetase with relaxed tRNA specificity since it is able to aspartylate not only its cognate tRNA(Asp) but also tRNA(Asn). Reaction proceeds in two steps: L-aspartate is first activated by ATP to form Asp-AMP and then transferred to the acceptor end of tRNA(Asp/Asn). The sequence is that of Aspartate--tRNA(Asp/Asn) ligase from Pseudomonas fluorescens (strain SBW25).